A 235-amino-acid polypeptide reads, in one-letter code: Sugar fermentation stimulation protein homolog (235 aa).

The protein belongs to the SfsA family.

The polypeptide is Sugar fermentation stimulation protein homolog (Bartonella henselae (strain ATCC 49882 / DSM 28221 / CCUG 30454 / Houston 1) (Rochalimaea henselae)).